The following is a 1442-amino-acid chain: ABC transporter G family member 11 (1442 aa).

Residues 125–373 (LFTPSFWTKK…FMSLGFDCEP (249 aa)) form the ABC transporter 1 domain. One can recognise an ABC transmembrane type-2 1 domain in the interval 478–718 (LNDKFGMYSK…EQGSLYFKGD (241 aa)). Helical transmembrane passes span 482–502 (FGMY…ASLF), 518–538 (AILS…AMTF), 567–587 (IPFT…MFGL), 592–612 (GKFF…TALF), 627–647 (NISN…IPIP), and 737–757 (IIVY…MEYI). The 245-residue stretch at 808-1052 (FTWQNIRYTV…LTSYFERHGV (245 aa)) folds into the ABC transporter 2 domain. An ATP-binding site is contributed by 844 to 851 (GSSGAGKT). The ABC transmembrane type-2 2 domain occupies 1144-1369 (YYTYGSFVQA…YNTCQNYTSA (226 aa)). The next 6 helical transmembrane spans lie at 1147 to 1167 (YGSF…FWNL), 1181 to 1201 (IFEA…QLII), 1220 to 1240 (FAIS…TIFF), 1259 to 1279 (FYFW…GQAV), 1286 to 1306 (MFFA…FCGV), and 1416 to 1436 (VGII…FVYL).

This sequence belongs to the ABC transporter superfamily. ABCG family. PDR (TC 3.A.1.205) subfamily.

Its subcellular location is the membrane. In Dictyostelium discoideum (Social amoeba), this protein is ABC transporter G family member 11 (abcG11).